The chain runs to 59 residues: Transcription elongation factor Spt4 (59 aa).

Positions 4, 7, 16, and 19 each coordinate Zn(2+).

This sequence belongs to the archaeal Spt4 family. Heterodimer composed of Spt4 and Spt5.

Functionally, stimulates transcription elongation. The polypeptide is Transcription elongation factor Spt4 (Methanocaldococcus jannaschii (strain ATCC 43067 / DSM 2661 / JAL-1 / JCM 10045 / NBRC 100440) (Methanococcus jannaschii)).